The primary structure comprises 363 residues: UDP-N-acetylglucosamine--N-acetylmuramyl-(pentapeptide) pyrophosphoryl-undecaprenol N-acetylglucosamine transferase (363 aa).

Residues 14-16 (TGG), N122, R163, S190, and Q285 each bind UDP-N-acetyl-alpha-D-glucosamine.

The protein belongs to the glycosyltransferase 28 family. MurG subfamily.

The protein localises to the cell inner membrane. The enzyme catalyses di-trans,octa-cis-undecaprenyl diphospho-N-acetyl-alpha-D-muramoyl-L-alanyl-D-glutamyl-meso-2,6-diaminopimeloyl-D-alanyl-D-alanine + UDP-N-acetyl-alpha-D-glucosamine = di-trans,octa-cis-undecaprenyl diphospho-[N-acetyl-alpha-D-glucosaminyl-(1-&gt;4)]-N-acetyl-alpha-D-muramoyl-L-alanyl-D-glutamyl-meso-2,6-diaminopimeloyl-D-alanyl-D-alanine + UDP + H(+). The protein operates within cell wall biogenesis; peptidoglycan biosynthesis. In terms of biological role, cell wall formation. Catalyzes the transfer of a GlcNAc subunit on undecaprenyl-pyrophosphoryl-MurNAc-pentapeptide (lipid intermediate I) to form undecaprenyl-pyrophosphoryl-MurNAc-(pentapeptide)GlcNAc (lipid intermediate II). The chain is UDP-N-acetylglucosamine--N-acetylmuramyl-(pentapeptide) pyrophosphoryl-undecaprenol N-acetylglucosamine transferase from Prochlorococcus marinus (strain AS9601).